A 429-amino-acid polypeptide reads, in one-letter code: MKGTVFAVALNHRSQLDAWQEAFSQPPYNAPPKTAVWFIKPRNTVIRHGEPILYPQGEKVLSGATVALIVGKTASRKRSEAAAEYIAGYALANEVSLPEESFYRPAIKAKCRDGFCPLGEMAPLSDVDNLTIITEINGREADHWNTADLQRSAAQLLSALSEFATLNPGDAILLGTPQNRVALRPGDRVRILAKGLPALENPVVAEDEFARNQTFTWPLSATGTLFALGLNYADHASELAFTPPKEPLVFIKAPNTFTEHHQTSVRPNNVEYMHYEAELVVVIGKTARKVSEAEAMEYVAGYTVCNDYAIRDYLENYYRPNLRVKSRDGLTPIGPWIVDKEAVSDPHNLTLRTFVNGELRQEGTTADLIFSIPFLISYLSEFMTLQPGDMIATGTPKGLSDVVPGDEVVLEIKGVGRLVNQIVCEESAN.

2 Approximate repeats span residues Met-1 to Phe-215 and Thr-216 to Asn-429. A divalent metal cation is bound by residues Glu-276, Glu-278, and Asp-307.

The protein belongs to the FAH family. Monomer. Requires Mg(2+) as cofactor.

The enzyme catalyses (2E,4Z)-5-hydroxypenta-2,4-diene-1,2,5-tricarboxylate = (3E,5R)-5-carboxy-2-oxohept-3-enedioate. The catalysed reaction is (3E,5R)-5-carboxy-2-oxohept-3-enedioate + H(+) = (4Z)-2-oxohept-4-enedioate + CO2. The protein operates within aromatic compound metabolism; 4-hydroxyphenylacetate degradation; pyruvate and succinate semialdehyde from 4-hydroxyphenylacetate: step 4/7. Its pathway is aromatic compound metabolism; 4-hydroxyphenylacetate degradation; pyruvate and succinate semialdehyde from 4-hydroxyphenylacetate: step 5/7. In terms of biological role, decarboxylates OPET (5-oxo-pent-3-ene-1,2,5-tricarboxylic acid) into HHDD (2-hydroxy-hept-2,4-diene-1,7-dioate) and isomerizes it to OHED (2-oxo-hept-3-ene-1,7-dioate). This is 4-hydroxyphenylacetate degradation bifunctional isomerase/decarboxylase (hpaG) from Salmonella dublin.